The following is a 271-amino-acid chain: Mitochondrial distribution and morphology protein 12 (271 aa).

Residues methionine 1–asparagine 267 enclose the SMP-LTD domain. Residue lysine 49 forms a Glycyl lysine isopeptide (Lys-Gly) (interchain with G-Cter in ubiquitin) linkage.

It belongs to the MDM12 family. As to quaternary structure, component of the ER-mitochondria encounter structure (ERMES) or MDM complex, composed of MMM1, MDM10, MDM12 and MDM34. An MMM1 homodimer associates with one molecule of MDM12 on each side in a pairwise head-to-tail manner, and the SMP-LTD domains of MMM1 and MDM12 generate a continuous hydrophobic tunnel for phospholipid trafficking. Interacts with PUF3.

It is found in the mitochondrion outer membrane. The protein localises to the endoplasmic reticulum membrane. Its function is as follows. Component of the ERMES/MDM complex, which serves as a molecular tether to connect the endoplasmic reticulum (ER) and mitochondria. Components of this complex are involved in the control of mitochondrial shape and protein biogenesis, and function in nonvesicular lipid trafficking between the ER and mitochondria. MDM12 is required for the interaction of the ER-resident membrane protein MMM1 and the outer mitochondrial membrane-resident beta-barrel protein MDM10. The MDM12-MMM1 subcomplex functions in the major beta-barrel assembly pathway that is responsible for biogenesis of all mitochondrial outer membrane beta-barrel proteins, and acts in a late step after the SAM complex. The MDM10-MDM12-MMM1 subcomplex further acts in the TOM40-specific pathway after the action of the MDM12-MMM1 complex. Essential for establishing and maintaining the structure of mitochondria and maintenance of mtDNA nucleoids. The protein is Mitochondrial distribution and morphology protein 12 of Saccharomyces cerevisiae (strain AWRI1631) (Baker's yeast).